The chain runs to 4334 residues: Cytoplasmic dynein 2 heavy chain 1 (4334 aa).

The tract at residues 1–1704 is stem; the sequence is MSSDSRKTFV…KVAMAEATFD (1704 aa). Position 150 to 157 (150 to 157) interacts with ATP; it reads LGTAVRKG. The stretch at 1026-1097 forms a coiled coil; sequence QEAKGLTAKL…AHLEEQKGNL (72 aa). 4 AAA regions span residues 1705 to 1929, 1996 to 2211, 2299 to 2544, and 2641 to 2882; these read YTWE…VLGI, KALA…KAFQ, GMDE…WING, and GYER…SSGS. Residues 1743–1750, 2034–2041, 2334–2341, and 2679–2686 each bind ATP; these read GPAGTGKT, GPSGSGKS, GPEGCGKG, and GNSGVGRR. Residues 2897–3185 form a stalk region; the sequence is QIYNRKRTQV…ISVDKAESVL (289 aa). Coiled coils occupy residues 2930-2998 and 3120-3199; these read LSAE…SEVQ and ERVS…RGEK. AAA regions lie at residues 3260–3492 and 3701–3917; these read LSSE…TVEK and MSSF…VITL.

Belongs to the dynein heavy chain family. As to quaternary structure, the cytoplasmic dynein complex 2 is probably composed by a DHC1B homodimer and a number of D1BLIC light intermediate chains. Interacts with FAP133, FLA10 and LC8.

The protein localises to the cytoplasm. Its subcellular location is the cytoskeleton. It is found in the flagellum basal body. The protein resides in the cell projection. It localises to the cilium. The protein localises to the flagellum membrane. Its function is as follows. May function as a motor for intraflagellar retrograde transport. Functions in flagellar biogenesis. This is Cytoplasmic dynein 2 heavy chain 1 (DHC1B) from Chlamydomonas reinhardtii (Chlamydomonas smithii).